A 229-amino-acid polypeptide reads, in one-letter code: MEFRSVAERICGDIVLSENSGEALRKWRSIFNASQSDLARKLGISPSVISDYESGRRKPGTAFLKKFVCALIELDGERGYQVLSKYRYFLESDHKAVLDIAEYQKTAEPSEFCEVIEGKMLTHFDKAIHGHTVIDSINAILSLNAFDFYRLYGLTSERALIFTRVSTGRSPMVAVRVSNLKPSAVVLHGLEAERVDEMAKKIAEIERIPLVVTEIAIGEIVKRLRRKFA.

The 55-residue stretch at 24-78 folds into the HTH cro/C1-type domain; the sequence is LRKWRSIFNASQSDLARKLGISPSVISDYESGRRKPGTAFLKKFVCALIELDGER. The H-T-H motif DNA-binding region spans 35 to 54; it reads QSDLARKLGISPSVISDYES.

This is an uncharacterized protein from Archaeoglobus fulgidus (strain ATCC 49558 / DSM 4304 / JCM 9628 / NBRC 100126 / VC-16).